The chain runs to 312 residues: tRNA dimethylallyltransferase (312 aa).

10–17 (GPTASGKS) serves as a coordination point for ATP. 12–17 (TASGKS) lines the substrate pocket. Residues 35-38 (DSKQ) are interaction with substrate tRNA.

This sequence belongs to the IPP transferase family. Monomer. The cofactor is Mg(2+).

The catalysed reaction is adenosine(37) in tRNA + dimethylallyl diphosphate = N(6)-dimethylallyladenosine(37) in tRNA + diphosphate. In terms of biological role, catalyzes the transfer of a dimethylallyl group onto the adenine at position 37 in tRNAs that read codons beginning with uridine, leading to the formation of N6-(dimethylallyl)adenosine (i(6)A). The protein is tRNA dimethylallyltransferase of Anaplasma phagocytophilum (strain HZ).